We begin with the raw amino-acid sequence, 276 residues long: Secretagogin (276 aa).

EF-hand domains follow at residues 12–47, 58–93, 105–140, 149–184, 197–232, and 240–276; these read LDAA…LLAK, NVQK…EDEN, DNSV…LFLH, ELEE…QENF, ERKR…MMEL, and VDLD…KINP. Ca(2+)-binding residues include D25, Y31, E36, S73, E75, R77, E82, D118, D120, S122, E129, D162, N164, D166, R168, D173, D210, S212, T214, E221, D254, N256, D258, K260, and E265.

It localises to the cytoplasm. It is found in the secreted. Its subcellular location is the cytoplasmic vesicle. The protein localises to the secretory vesicle membrane. The protein is Secretagogin (Scgn) of Mus musculus (Mouse).